We begin with the raw amino-acid sequence, 156 residues long: MSLELCNSTRQAIPNKRLLQAIRMVVQGEGYEIATITGVYCGNRMSQRINRDYLNHDYPTDTITFCYSEGKAIEGEFYISLDVIRCNARHFNVTFEEELLRVTIHSALHLTGMNDYLPEERVAMQAKEDYYLQLLKTQKSISPQKSTDNAIFSCNS.

Positions 105, 109, and 115 each coordinate Zn(2+).

This sequence belongs to the endoribonuclease YbeY family. It depends on Zn(2+) as a cofactor.

It is found in the cytoplasm. Functionally, single strand-specific metallo-endoribonuclease involved in late-stage 70S ribosome quality control and in maturation of the 3' terminus of the 16S rRNA. The protein is Endoribonuclease YbeY of Chlorobium chlorochromatii (strain CaD3).